Reading from the N-terminus, the 150-residue chain is Large ribosomal subunit protein bL9 (150 aa).

It belongs to the bacterial ribosomal protein bL9 family.

Functionally, binds to the 23S rRNA. This is Large ribosomal subunit protein bL9 from Colwellia psychrerythraea (strain 34H / ATCC BAA-681) (Vibrio psychroerythus).